The primary structure comprises 817 residues: MAATTASCISFSQFQRLKKLIDSPASKHKPMEFKGTSKDDLEDDLNSFFDCEEELFLSANKIFYSKLRVYQTVRHWSLKQNWSSMSLDQKRNFILHCHHELSSGELLRNSALYSILYIAAGAYDSVGSFEEHVHSISENVYLLREFDIPKTVYSLFIEWNRTRKHSFLDNSRDEGFLNLLLSLMFFFLTLNNTDKTWIHSIRSLNPPVLPTLVKLFIDITSDYQLNLDKVIHSSLKKLSFLIFKVCIRLWGSQSYLQEKKAGLAEVLNISTSQQKPKTTALDYEVFRHEMATKFSSFADSYYPVPLDREQAHILPTLNTDSFHKSSFISSTRLCSPENPSLLVNTAKTSKMSARREQFQTNQNLPFCFTPNLEKLTIPYSVTEAANVFQNKTKRTLAVEQLLSERELLRRFTLQQRLVADLHEFYNSVKGPAHSFETEDPVLKFVSQSYDDLFPYMDNFIQLAVQLFYHISKKVNCLYVEAFSSSDAVLQRIQDNAVVDSPTEELSEQAARNRKSNVKIEYTEDFATGFAISGEISHSINNLEFVLYSLSSLFLMMLKWFRLSHVLRFERLAFLLYENHFLEIFNRHLTEGDCNRNTEKDVKCVRGGFFSYSSKMYKYDRVSIPVITRASSSRNLLITMNCLRVLEKVCKYSNIRKEIIARSNLHENLKKLLAIPHDKLRLYALKVLKLSVPFLGLKWKQANMSIITQIYLNCSLDLRDSWMFHENGSDTYRSAQLQETFLAILIRFYHIRLYGKKCKSLYQFCILEEMRLKKSIEELAASNMMEYIPESLWSYSFERSDTGFFENEFAAMHINDIA.

Position 500 is a phosphoserine (serine 500). At threonine 502 the chain carries Phosphothreonine.

This sequence belongs to the FAR11 family.

It is found in the vacuole. Its function is as follows. Participates in the control of the reentry into the cell cycle following pheromone treatment. This Schizosaccharomyces pombe (strain 972 / ATCC 24843) (Fission yeast) protein is Factor arrest protein 11 (far11).